The primary structure comprises 417 residues: Protein FAM181B (417 aa).

Residues 104 to 147 (CSGLMGTAPPRPASPSAADAPAKRPPGAPTVATPAHCKAAPRRE) form a disordered region.

It belongs to the FAM181 family.

The sequence is that of Protein FAM181B (Fam181b) from Mus musculus (Mouse).